Here is a 171-residue protein sequence, read N- to C-terminus: Crossover junction endodeoxyribonuclease RuvC (171 aa).

Residues D7, E66, and D138 contribute to the active site. The Mg(2+) site is built by D7, E66, and D138.

It belongs to the RuvC family. In terms of assembly, homodimer which binds Holliday junction (HJ) DNA. The HJ becomes 2-fold symmetrical on binding to RuvC with unstacked arms; it has a different conformation from HJ DNA in complex with RuvA. In the full resolvosome a probable DNA-RuvA(4)-RuvB(12)-RuvC(2) complex forms which resolves the HJ. Mg(2+) is required as a cofactor.

It localises to the cytoplasm. The catalysed reaction is Endonucleolytic cleavage at a junction such as a reciprocal single-stranded crossover between two homologous DNA duplexes (Holliday junction).. In terms of biological role, the RuvA-RuvB-RuvC complex processes Holliday junction (HJ) DNA during genetic recombination and DNA repair. Endonuclease that resolves HJ intermediates. Cleaves cruciform DNA by making single-stranded nicks across the HJ at symmetrical positions within the homologous arms, yielding a 5'-phosphate and a 3'-hydroxyl group; requires a central core of homology in the junction. The consensus cleavage sequence is 5'-(A/T)TT(C/G)-3'. Cleavage occurs on the 3'-side of the TT dinucleotide at the point of strand exchange. HJ branch migration catalyzed by RuvA-RuvB allows RuvC to scan DNA until it finds its consensus sequence, where it cleaves and resolves the cruciform DNA. In Thiobacillus denitrificans (strain ATCC 25259 / T1), this protein is Crossover junction endodeoxyribonuclease RuvC.